A 360-amino-acid polypeptide reads, in one-letter code: Phospho-N-acetylmuramoyl-pentapeptide-transferase (360 aa).

10 helical membrane passes run 26–46 (TILG…AVIQ), 70–90 (GTPT…TLLW), 97–117 (YVWV…VDDY), 132–152 (AKFF…FSTA), 168–188 (VVLP…VGSS), 199–219 (GLAI…AYAT), 236–256 (AGEV…FLWF), 263–283 (VFMG…LAVV), 288–308 (LVLL…MLQV), and 338–358 (VIVR…AMLK).

The protein belongs to the glycosyltransferase 4 family. MraY subfamily. It depends on Mg(2+) as a cofactor.

The protein resides in the cell inner membrane. It carries out the reaction UDP-N-acetyl-alpha-D-muramoyl-L-alanyl-gamma-D-glutamyl-meso-2,6-diaminopimeloyl-D-alanyl-D-alanine + di-trans,octa-cis-undecaprenyl phosphate = di-trans,octa-cis-undecaprenyl diphospho-N-acetyl-alpha-D-muramoyl-L-alanyl-D-glutamyl-meso-2,6-diaminopimeloyl-D-alanyl-D-alanine + UMP. It functions in the pathway cell wall biogenesis; peptidoglycan biosynthesis. Catalyzes the initial step of the lipid cycle reactions in the biosynthesis of the cell wall peptidoglycan: transfers peptidoglycan precursor phospho-MurNAc-pentapeptide from UDP-MurNAc-pentapeptide onto the lipid carrier undecaprenyl phosphate, yielding undecaprenyl-pyrophosphoryl-MurNAc-pentapeptide, known as lipid I. The polypeptide is Phospho-N-acetylmuramoyl-pentapeptide-transferase (Alkalilimnicola ehrlichii (strain ATCC BAA-1101 / DSM 17681 / MLHE-1)).